Consider the following 86-residue polypeptide: UPF0457 protein SAUSA300_2132 (86 aa).

This sequence belongs to the UPF0457 family.

The polypeptide is UPF0457 protein SAUSA300_2132 (Staphylococcus aureus (strain USA300)).